The chain runs to 191 residues: Protein Ves (191 aa).

Belongs to the Ves family.

This chain is Protein Ves, found in Citrobacter koseri (strain ATCC BAA-895 / CDC 4225-83 / SGSC4696).